The chain runs to 90 residues: Small ribosomal subunit protein uS15 (90 aa).

This sequence belongs to the universal ribosomal protein uS15 family. Part of the 30S ribosomal subunit. Forms a bridge to the 50S subunit in the 70S ribosome, contacting the 23S rRNA.

One of the primary rRNA binding proteins, it binds directly to 16S rRNA where it helps nucleate assembly of the platform of the 30S subunit by binding and bridging several RNA helices of the 16S rRNA. In terms of biological role, forms an intersubunit bridge (bridge B4) with the 23S rRNA of the 50S subunit in the ribosome. The chain is Small ribosomal subunit protein uS15 from Campylobacter curvus (strain 525.92).